A 449-amino-acid chain; its full sequence is Heterogeneous nuclear ribonucleoprotein H2 (449 aa).

Met-1 bears the N-acetylmethionine mark. Met-2 is subject to N-acetylmethionine; in Heterogeneous nuclear ribonucleoprotein H2, N-terminally processed. The RRM 1 domain maps to 11-90; the sequence is FVVKVRGLPW…RYVEVFKSNS (80 aa). Ser-23 bears the Phosphoserine mark. Residue Lys-35 forms a Glycyl lysine isopeptide (Lys-Gly) (interchain with G-Cter in SUMO2) linkage. A phosphoserine mark is found at Ser-54 and Ser-63. A Glycyl lysine isopeptide (Lys-Gly) (interchain with G-Cter in SUMO2) cross-link involves residue Lys-87. Ser-90 is subject to Phosphoserine. Residue Lys-98 forms a Glycyl lysine isopeptide (Lys-Gly) (interchain with G-Cter in SUMO2) linkage. The region spanning 111-188 is the RRM 2 domain; it reads GFVRLRGLPF…RYIEIFKSSR (78 aa). Arg-233 bears the Dimethylated arginine; alternate mark. Arg-233 carries the omega-N-methylarginine; alternate modification. A 1-1 repeat occupies 234–249; the sequence is GAYGGGYGGYDDYGGY. Positions 234–433 are 2 X 16 AA Gly-rich approximate repeats; that stretch reads GAYGGGYGGY…YGGQSSMSGY (200 aa). A Phosphotyrosine modification is found at Tyr-246. In terms of domain architecture, RRM 3 spans 289–364; that stretch reads HCVHMRGLPY…RYVELFLNST (76 aa). At Ser-310 the chain carries Phosphoserine. 3 tandem repeats follow at residues 354-372, 374-392, and 418-433. Residues 354-392 form a 2 X 19 AA perfect repeats region; that stretch reads HRYVELFLNSTAGTSGGAYDHSYVELFLNSTAGASGGAY.

Component of a ribonucleoprotein complex containing mRNAs and RNA-binding proteins including DDX5, HNRNPH2 and SRSF1 as well as splicing regulator ARVCF. Interacts with TXNL4/DIM1.

Its subcellular location is the nucleus. The protein resides in the nucleoplasm. Its function is as follows. This protein is a component of the heterogeneous nuclear ribonucleoprotein (hnRNP) complexes which provide the substrate for the processing events that pre-mRNAs undergo before becoming functional, translatable mRNAs in the cytoplasm. Binds poly(RG). The sequence is that of Heterogeneous nuclear ribonucleoprotein H2 (Hnrnph2) from Rattus norvegicus (Rat).